The sequence spans 166 residues: Large ribosomal subunit protein uL10 (166 aa).

It belongs to the universal ribosomal protein uL10 family. As to quaternary structure, part of the ribosomal stalk of the 50S ribosomal subunit. The N-terminus interacts with L11 and the large rRNA to form the base of the stalk. The C-terminus forms an elongated spine to which L12 dimers bind in a sequential fashion forming a multimeric L10(L12)X complex.

Forms part of the ribosomal stalk, playing a central role in the interaction of the ribosome with GTP-bound translation factors. The sequence is that of Large ribosomal subunit protein uL10 from Staphylococcus aureus (strain JH1).